The sequence spans 105 residues: Small ribosomal subunit protein uS10 (105 aa).

The protein belongs to the universal ribosomal protein uS10 family. Part of the 30S ribosomal subunit.

In terms of biological role, involved in the binding of tRNA to the ribosomes. The chain is Small ribosomal subunit protein uS10 from Bdellovibrio bacteriovorus (strain ATCC 15356 / DSM 50701 / NCIMB 9529 / HD100).